Consider the following 337-residue polypeptide: 5-formaminoimidazole-4-carboxamide-1-(beta)-D-ribofuranosyl 5'-monophosphate synthetase (337 aa).

Residues histidine 9 and serine 73 each contribute to the 5-amino-1-(5-phospho-beta-D-ribosyl)imidazole-4-carboxamide site. The ATP-grasp domain maps to lysine 94 to arginine 324. Residues proline 124–tyrosine 184 and glutamate 206 contribute to the ATP site. Asparagine 234 provides a ligand contact to 5-amino-1-(5-phospho-beta-D-ribosyl)imidazole-4-carboxamide. Residues glutamate 273 and glutamate 286 each coordinate Mg(2+).

This sequence belongs to the phosphohexose mutase family. Mg(2+) is required as a cofactor. It depends on Mn(2+) as a cofactor.

It carries out the reaction 5-amino-1-(5-phospho-beta-D-ribosyl)imidazole-4-carboxamide + formate + ATP = 5-formamido-1-(5-phospho-D-ribosyl)imidazole-4-carboxamide + ADP + phosphate. Its pathway is purine metabolism; IMP biosynthesis via de novo pathway; 5-formamido-1-(5-phospho-D-ribosyl)imidazole-4-carboxamide from 5-amino-1-(5-phospho-D-ribosyl)imidazole-4-carboxamide (formate route): step 1/1. In terms of biological role, catalyzes the ATP- and formate-dependent formylation of 5-aminoimidazole-4-carboxamide-1-beta-d-ribofuranosyl 5'-monophosphate (AICAR) to 5-formaminoimidazole-4-carboxamide-1-beta-d-ribofuranosyl 5'-monophosphate (FAICAR) in the absence of folates. The protein is 5-formaminoimidazole-4-carboxamide-1-(beta)-D-ribofuranosyl 5'-monophosphate synthetase of Saccharolobus solfataricus (strain ATCC 35092 / DSM 1617 / JCM 11322 / P2) (Sulfolobus solfataricus).